The primary structure comprises 85 residues: RNA-binding protein Hfq (85 aa).

One can recognise a Sm domain in the interval 9–68 (DPFLNALRRERIPVSIYLVNGIKLQGQIESFDQFVILLKNTVNQMVYKHAISTVVPARPV). The tract at residues 66 to 85 (RPVNHHHASDRPATLEKTEE) is disordered. Residues 72–85 (HASDRPATLEKTEE) are compositionally biased toward basic and acidic residues.

This sequence belongs to the Hfq family. Homohexamer.

RNA chaperone that binds small regulatory RNA (sRNAs) and mRNAs to facilitate mRNA translational regulation in response to envelope stress, environmental stress and changes in metabolite concentrations. Also binds with high specificity to tRNAs. The protein is RNA-binding protein Hfq of Photobacterium profundum (strain SS9).